The following is a 234-amino-acid chain: Redox-sensing transcriptional repressor Rex (234 aa).

Positions T17–F56 form a DNA-binding region, H-T-H motif. Residue G91–G96 coordinates NAD(+).

It belongs to the transcriptional regulatory Rex family. Homodimer.

Its subcellular location is the cytoplasm. Modulates transcription in response to changes in cellular NADH/NAD(+) redox state. This chain is Redox-sensing transcriptional repressor Rex, found in Deinococcus radiodurans (strain ATCC 13939 / DSM 20539 / JCM 16871 / CCUG 27074 / LMG 4051 / NBRC 15346 / NCIMB 9279 / VKM B-1422 / R1).